Consider the following 1124-residue polypeptide: Putative DNA mismatch repair protein mutS homolog L359 (1124 aa).

An ATP-binding site is contributed by 779–786 (SNNWAGKS).

Belongs to the DNA mismatch repair MutS family.

May be involved in DNA-mismatch repair. This chain is Putative DNA mismatch repair protein mutS homolog L359, found in Acanthamoeba polyphaga (Amoeba).